A 326-amino-acid polypeptide reads, in one-letter code: Mitochondrial glycine transporter (326 aa).

3 Solcar repeats span residues 45 to 134 (HPVI…SKQY), 141 to 225 (PTAL…TRAT), and 237 to 321 (LMPL…MMAK). 6 consecutive transmembrane segments (helical) span residues 51–76 (FLCGSISGTCSTLLFQPLDLLKTRLQ), 109–135 (GMSPSIVRCVPGVGIYFGTLYSSKQYF), 147–172 (VILGMGSRSVAGVCMSPITVVKTRYE), 200–223 (GLTATLLRDAPFSGLYLMFYSQTR), 241–267 (VNFSCGVFAGILASLVTQPADVIKTHM), and 296–314 (GSVPRALRRTLMAAMAWTV).

The protein belongs to the mitochondrial carrier (TC 2.A.29) family. SLC25A38 subfamily.

It localises to the mitochondrion inner membrane. It carries out the reaction glycine(in) = glycine(out). Mitochondrial glycine transporter that imports glycine into the mitochondrial matrix. Plays an important role in providing glycine for the first enzymatic step in heme biosynthesis, the condensation of glycine with succinyl-CoA to produce 5-aminolevulinate (ALA) in the mitochondrial matrix. Required during erythropoiesis. In terms of biological role, plays a role as pro-apoptotic protein that induces caspase-dependent apoptosis. This chain is Mitochondrial glycine transporter, found in Rattus norvegicus (Rat).